A 326-amino-acid chain; its full sequence is Aquaporin-4 (326 aa).

Over 1 to 39 (MSDGAGAAARRWGKCGGRSCSRESIMVAFKGVWTQAFWK) the chain is Cytoplasmic. S-palmitoyl cysteine attachment occurs at residues Cys15 and Cys20. Residues 40-60 (AVTAEFLAMLIFVLLSVGSTI) form a helical membrane-spanning segment. Over 61–72 (NWGGSENPLPVD) the chain is Extracellular. The chain crosses the membrane as a helical span at residues 73-92 (MVLISLCFGLSIATMVQCFG). Residues 93–96 (HISG) lie on the Cytoplasmic side of the membrane. The segment at residues 97 to 104 (GHINPAVT) is an intramembrane region (discontinuously helical). The NPA 1 signature appears at 100–102 (NPA). Residues 105-118 (VAMVCTRKISIAKS) are Cytoplasmic-facing. Ser114 is subject to Phosphoserine; by PKG. A helical transmembrane segment spans residues 119–139 (VFYITAQCLGAIIGAGILYLV). The Extracellular portion of the chain corresponds to 140–158 (TPPNVVGGLGVTTVHGNLT). N-linked (GlcNAc...) asparagine glycosylation is present at Asn156. The chain crosses the membrane as a helical span at residues 159–179 (AGHGLLVELIITFQLVFTIFA). Residues 180–187 (SCDSKRTD) lie on the Cytoplasmic side of the membrane. Ser183 bears the Phosphoserine; by PKC mark. The helical transmembrane segment at 188–208 (VTGSIALAIGFSVAIGHLFAI) threads the bilayer. The N-linked (GlcNAc...) asparagine glycan is linked to Asn209. The Extracellular portion of the chain corresponds to 209–211 (NYT). The discontinuously helical intramembrane region spans 212 to 225 (GASMNPARSFGPAV). An NPA 2 motif is present at residues 216 to 218 (NPA). Residues 226-234 (IMGNWENHW) lie on the Extracellular side of the membrane. Residues 235 to 255 (IYWVGPIIGAVLAGALYEYVF) traverse the membrane as a helical segment. The Cytoplasmic segment spans residues 256–326 (CPDVELKRRL…DSAGEVLSSV (71 aa)). 2 positions are modified to phosphoserine: Ser279 and Ser288. Thr292 carries the post-translational modification Phosphothreonine. Ser324 bears the Phosphoserine mark.

This sequence belongs to the MIP/aquaporin (TC 1.A.8) family. Homotetramer. The tetramers can form oligomeric arrays in membranes. The size of the oligomers differs between tissues and is smaller in skeletal muscle than in brain. Interaction between AQP4 oligomeric arrays in close-by cells can contribute to cell-cell adhesion. Part of a complex containing MLC1, TRPV4, HEPACAM and ATP1B1. Post-translationally, phosphorylation by PKC at Ser-183 reduces conductance by 50%. Phosphorylation by PKG at Ser-114 in response to glutamate increases conductance by 40%. Isoform Long: Palmitoylated on its N-terminal region.

The protein resides in the cell membrane. The protein localises to the basolateral cell membrane. It localises to the endosome membrane. Its subcellular location is the sarcolemma. It is found in the cell projection. The catalysed reaction is H2O(in) = H2O(out). Forms a water-specific channel. Plays an important role in brain water homeostasis and in glymphatic solute transport. Required for a normal rate of water exchange across the blood brain interface. Required for normal levels of cerebrospinal fluid influx into the brain cortex and parenchyma along paravascular spaces that surround penetrating arteries, and for normal drainage of interstitial fluid along paravenous drainage pathways. Thereby, it is required for normal clearance of solutes from the brain interstitial fluid, including soluble beta-amyloid peptides derived from APP. Plays a redundant role in urinary water homeostasis and urinary concentrating ability. The chain is Aquaporin-4 (AQP4) from Notomys alexis (Spinifex hopping mouse).